The sequence spans 412 residues: Probable tRNA sulfurtransferase (412 aa).

The region spanning 58–163 (DEVIKQLGYV…SEGTYIYVGK (106 aa)) is the THUMP domain. ATP contacts are provided by residues 181–182 (ML), 206–207 (HF), arginine 265, glycine 287, and glutamine 296.

Belongs to the ThiI family.

The protein localises to the cytoplasm. It carries out the reaction [ThiI sulfur-carrier protein]-S-sulfanyl-L-cysteine + a uridine in tRNA + 2 reduced [2Fe-2S]-[ferredoxin] + ATP + H(+) = [ThiI sulfur-carrier protein]-L-cysteine + a 4-thiouridine in tRNA + 2 oxidized [2Fe-2S]-[ferredoxin] + AMP + diphosphate. It catalyses the reaction [ThiS sulfur-carrier protein]-C-terminal Gly-Gly-AMP + S-sulfanyl-L-cysteinyl-[cysteine desulfurase] + AH2 = [ThiS sulfur-carrier protein]-C-terminal-Gly-aminoethanethioate + L-cysteinyl-[cysteine desulfurase] + A + AMP + 2 H(+). Its pathway is cofactor biosynthesis; thiamine diphosphate biosynthesis. Catalyzes the ATP-dependent transfer of a sulfur to tRNA to produce 4-thiouridine in position 8 of tRNAs, which functions as a near-UV photosensor. Also catalyzes the transfer of sulfur to the sulfur carrier protein ThiS, forming ThiS-thiocarboxylate. This is a step in the synthesis of thiazole, in the thiamine biosynthesis pathway. The sulfur is donated as persulfide by IscS. The polypeptide is Probable tRNA sulfurtransferase (Acholeplasma laidlawii (strain PG-8A)).